A 573-amino-acid polypeptide reads, in one-letter code: Phosphoenolpyruvate-protein phosphotransferase (573 aa).

Catalysis depends on His190, which acts as the Tele-phosphohistidine intermediate. Residues Arg297 and Arg334 each coordinate phosphoenolpyruvate. 2 residues coordinate Mg(2+): Glu433 and Asp457. Phosphoenolpyruvate is bound by residues 456–457 (ND) and Arg467. Cys504 (proton donor) is an active-site residue.

It belongs to the PEP-utilizing enzyme family. Homodimer. Requires Mg(2+) as cofactor.

The protein localises to the cytoplasm. It catalyses the reaction L-histidyl-[protein] + phosphoenolpyruvate = N(pros)-phospho-L-histidyl-[protein] + pyruvate. Functionally, general (non sugar-specific) component of the phosphoenolpyruvate-dependent sugar phosphotransferase system (sugar PTS). This major carbohydrate active-transport system catalyzes the phosphorylation of incoming sugar substrates concomitantly with their translocation across the cell membrane. Enzyme I transfers the phosphoryl group from phosphoenolpyruvate (PEP) to the phosphoryl carrier protein (HPr). The polypeptide is Phosphoenolpyruvate-protein phosphotransferase (ptsI) (Borreliella burgdorferi (strain ATCC 35210 / DSM 4680 / CIP 102532 / B31) (Borrelia burgdorferi)).